The sequence spans 564 residues: Pestheic acid cluster transcriptional regulator 3 (564 aa).

Positions 11–38 (CWTCRLRRKKCDEGKPECTTCQALSITC) form a DNA-binding region, zn(2)-C6 fungal-type. Residues 71–123 (RTSSRYRVPPGQKANPKLAPKVHAAASTPSTNTSHSTETTPPSDNGFYDTAES) form a disordered region. Polar residues predominate over residues 97 to 113 (STPSTNTSHSTETTPPS).

The protein resides in the nucleus. Its function is as follows. Transcription factor that, with ptaR1 and ptaR2, coregulates the expression of the gene cluster that mediates the biosynthesis of pestheic acid, a diphenyl ether which is a biosynthetic precursor of the unique chloropupukeananes. This Pestalotiopsis fici (strain W106-1 / CGMCC3.15140) protein is Pestheic acid cluster transcriptional regulator 3.